The chain runs to 194 residues: dCTP deaminase (194 aa).

DCTP is bound by residues 110 to 115 (RSSLAR), Asp-128, 136 to 138 (VLE), Tyr-171, Lys-178, and Gln-182. The active-site Proton donor/acceptor is the Glu-138.

It belongs to the dCTP deaminase family. In terms of assembly, homotrimer.

It carries out the reaction dCTP + H2O + H(+) = dUTP + NH4(+). The protein operates within pyrimidine metabolism; dUMP biosynthesis; dUMP from dCTP (dUTP route): step 1/2. Catalyzes the deamination of dCTP to dUTP. The protein is dCTP deaminase of Pasteurella multocida (strain Pm70).